Reading from the N-terminus, the 293-residue chain is MSEADVTARGDAALLGPAEVRALAERFGVRPTKQLGQNFVHDANTVRRIVTAAGVGRADTVLEVGPGLGSLTLALLDVVDSVVAVEIDPVLAEHLPRTVADRAPALAGRLRVVRDDALRVRAADLPASPTALVANLPYNVAVPVLLHLLAELPGLRTALVMVQAEVADRLAAEPGSRVYGVPSVKAGFFGTVRRAGAVGTQVFWPVPRVESGLVRVERYVEPPWPMDEQHRRRVFEIIDAAFAQRRKTLRAALAGWAGSPAEAERRLLAAGIDPTARGETLDTAAYVRLAAQA.

S-adenosyl-L-methionine is bound by residues Asn-38, Val-40, Gly-65, Glu-86, Asp-116, and Asn-135.

Belongs to the class I-like SAM-binding methyltransferase superfamily. rRNA adenine N(6)-methyltransferase family. RsmA subfamily.

It localises to the cytoplasm. It carries out the reaction adenosine(1518)/adenosine(1519) in 16S rRNA + 4 S-adenosyl-L-methionine = N(6)-dimethyladenosine(1518)/N(6)-dimethyladenosine(1519) in 16S rRNA + 4 S-adenosyl-L-homocysteine + 4 H(+). Functionally, specifically dimethylates two adjacent adenosines (A1518 and A1519) in the loop of a conserved hairpin near the 3'-end of 16S rRNA in the 30S particle. May play a critical role in biogenesis of 30S subunits. This Nocardia farcinica (strain IFM 10152) protein is Ribosomal RNA small subunit methyltransferase A.